Reading from the N-terminus, the 233-residue chain is Translation initiation factor 6 (233 aa).

The protein belongs to the eIF-6 family.

In terms of biological role, binds to the 50S ribosomal subunit and prevents its association with the 30S ribosomal subunit to form the 70S initiation complex. The protein is Translation initiation factor 6 of Aeropyrum pernix (strain ATCC 700893 / DSM 11879 / JCM 9820 / NBRC 100138 / K1).